The following is a 681-amino-acid chain: Translation factor GUF1 homolog, chloroplastic (681 aa).

The transit peptide at 1–51 directs the protein to the chloroplast; it reads MAMASAMDLSSPPTFFLSGTSTSSPSLRRLSSISVSGFRRHSNRKLQILCQ. The tr-type G domain maps to 84–265; it reads SNIRNFSIIA…AIVQRIPAPL (182 aa). GTP contacts are provided by residues 93 to 100, 158 to 162, and 212 to 215; these read AHIDHGKS, DTPGH, and NKID.

This sequence belongs to the TRAFAC class translation factor GTPase superfamily. Classic translation factor GTPase family. LepA subfamily.

The protein localises to the plastid. The protein resides in the chloroplast. The enzyme catalyses GTP + H2O = GDP + phosphate + H(+). Promotes chloroplast protein synthesis. May act as a fidelity factor of the translation reaction, by catalyzing a one-codon backward translocation of tRNAs on improperly translocated ribosomes. This Arabidopsis thaliana (Mouse-ear cress) protein is Translation factor GUF1 homolog, chloroplastic.